A 154-amino-acid chain; its full sequence is IQ domain-containing protein F3 (154 aa).

Residues 89 to 118 (QEQATVKLQSCIRMWQCRQCYRQMCNALCL) form the IQ domain.

This Homo sapiens (Human) protein is IQ domain-containing protein F3 (IQCF3).